A 168-amino-acid chain; its full sequence is Protein FAM163A (168 aa).

The chain crosses the membrane as a helical span at residues 6-26; the sequence is VVITGGILATVILLCIIAVLC.

It belongs to the FAM163 family.

Its subcellular location is the membrane. The chain is Protein FAM163A (Fam163a) from Mus musculus (Mouse).